A 371-amino-acid chain; its full sequence is 4-hydroxyphenylpyruvate dioxygenase-like protein (371 aa).

VOC domains follow at residues 7 to 135 (RLCH…LLQR) and 160 to 328 (HVDH…VFTK). Fe cation-binding residues include histidine 163, histidine 258, and glutamate 339.

It belongs to the 4HPPD family. It depends on Fe cation as a cofactor.

The protein resides in the mitochondrion. It carries out the reaction 3-(4-hydroxyphenyl)pyruvate + O2 = (S)-4-hydroxymandelate + CO2. In terms of biological role, iron-dependent dioxygenase that catalyzes the conversion of 4-hydroxyphenylpyruvate (4-HPPA) to 4-hydroxymandelate (4-HMA) in the mitochondria, one of the steps in the biosynthesis of coenzyme Q10 from tyrosine. This is 4-hydroxyphenylpyruvate dioxygenase-like protein from Mus musculus (Mouse).